The following is a 454-amino-acid chain: MAFQGPGRSLPGQLCAGVFGGLIQPPLGQKFYCPNGGSGGGGVPAVPSPLPQALSAPQCNGDGRGEPEPDRPIGYGAFGVVWSVTDPRDGKRVALKKMPNVFQNLVSCKRVFRELKMLCFFKHDNVLSALDILQPPQIDCFEEIYVITELMQTDLHKVIVSPQPLSSDHIKVFLYQILRGLKYLHSAGILHRDIKPGNLLVNSNCVLKICDFGLARVEELDESQHMTQEVVTQYYRAPEILMGSRHYRSAIDIWSVGCIFAELLGRRILFQAQSPIQQLDLITDLLGTPPLTAMRSACEGARAHILRGPHKPPSLSVLYMLSGEATHEAVHLLCRMLLFDPLKRISAKDALAHPYLEEGRLRYHTCMCHCCYSVSSGRVYTADFEPTATNRFDDSYEKSLTSVWQVKELVHRFITDQQQGKRPPLCINPHSAAFKTFIRSTAWHSSKVSKKEER.

The Protein kinase domain maps to Pro-67–Leu-356. ATP is bound by residues Ile-73–Val-81 and Lys-96. Residue Asp-193 is the Proton acceptor of the active site.

The protein belongs to the protein kinase superfamily. CMGC Ser/Thr protein kinase family. MAP kinase subfamily. Interacts with sox11, hmgxb4/hmg2l1, rnf138/narf, stat3.1 and mef2a. Requires Mg(2+) as cofactor.

It is found in the nucleus. Its subcellular location is the cytoplasm. It catalyses the reaction L-seryl-[protein] + ATP = O-phospho-L-seryl-[protein] + ADP + H(+). The catalysed reaction is L-threonyl-[protein] + ATP = O-phospho-L-threonyl-[protein] + ADP + H(+). Activated by tyrosine and threonine phosphorylation. Functionally, negatively regulates Wnt/beta-catenin-signaling during development. Plays a role together with sox11 in neural induction during early embryogenesis. Involved in TGFbeta-mediated mesoderm induction in early embryos, acting downstream of map3k7/tak1 to phosphorylate stat3. Augments the rnf138/narf-directed ubiquitination and degradation of tcf/lef by enhancing the association of rnf138/narf and tcf/lef. Phosphorylates mef2a to play a role in anterior neural development, including eye formation. The sequence is that of Serine/threonine-protein kinase NLK2 (nlk.2) from Xenopus tropicalis (Western clawed frog).